Here is a 961-residue protein sequence, read N- to C-terminus: Aconitate hydratase A (961 aa).

Residues Cys-499, Cys-565, and Cys-568 each contribute to the [4Fe-4S] cluster site.

This sequence belongs to the aconitase/IPM isomerase family. As to quaternary structure, monomer. The cofactor is [4Fe-4S] cluster.

It catalyses the reaction citrate = D-threo-isocitrate. The enzyme catalyses (2S,3R)-3-hydroxybutane-1,2,3-tricarboxylate = 2-methyl-cis-aconitate + H2O. Its pathway is carbohydrate metabolism; tricarboxylic acid cycle; isocitrate from oxaloacetate: step 2/2. The protein operates within organic acid metabolism; propanoate degradation. In terms of biological role, involved in the catabolism of short chain fatty acids (SCFA) via the tricarboxylic acid (TCA)(acetyl degradation route) and probably via the 2-methylcitrate cycle I (propionate degradation route). Catalyzes the reversible isomerization of citrate to isocitrate via cis-aconitate. The apo form of AcnA functions as a RNA-binding regulatory protein. Could catalyze the hydration of 2-methyl-cis-aconitate to yield (2R,3S)-2-methylisocitrate. The sequence is that of Aconitate hydratase A (acn) from Mycobacterium avium.